A 162-amino-acid chain; its full sequence is uncharacterized protein (162 aa).

Positions 65–76 are enriched in basic and acidic residues; the sequence is EEKPLEVAQDRN. The tract at residues 65-93 is disordered; the sequence is EEKPLEVAQDRNNKRKAPSHLEPAHDFIS.

This is an uncharacterized protein from Bacillus subtilis (strain 168).